A 739-amino-acid chain; its full sequence is MSPHQTTGQESDNMAVNGENAQASSQYIQLNSEETTDTVAAEKKAAAAKAKDPSRPKRKKAKRACYACQRGHLTCGDERPCQRCIKRGFQDACHDGVRKKAKYLHDAPNEALMAGVGASLYNQRNTTQNSINGANAPSSASQQITSPNFYNAQQSPDYNGYSQTKAELQDSTIGPENFASQSPVSPTYQMGQPMPNQGLSPSLPQSASETPSTANGAPSQFNSAFFDPSDPALFNFDLASMNFGNHYGALEFGMLGHMATGVGDTPPSDNGAQRGSIGQNSSGTFGLAGSNFAESPSNQGPYLFGDSGMNDWTQSAPVNRRNMYGSNANMVAGNMSDKPHAFAIESAPANFASPASNESPMMTTSSATFEDAANATAFNSRQNTSLPQQQQQQRQQPVVSTPQLKQQNLNIGSRRRHKNASSIYDSVKDPYSYTSGFHSLTAFIQRRFSPQKTLRIAKALASIRPSFIATTKTLNRDDLIFMEKCFQRTLWEYEDFINACGTPTIVCRRTGEIAAVGKEFSILTGWRKEVLLGKEPNHNVNTGGSSGLLTGSTSRGSYTPRPYSSDQFNSSTTATPRTQPVFLAELLDDDSVIEFYEDFAKLAFGDSRGSVMTTCKLLKYKTKADSGVIASGNGEVGAAQNNEVGSGEANELNSSSNGTTSTGRGQRRWGKGEIAGEAGMNQLGFRDGKVECSYCWTVKRDVFDIPMLIVMNGEMECMEVNIITSGQPNYQAFRALVKD.

Residues 1-33 show a composition bias toward polar residues; the sequence is MSPHQTTGQESDNMAVNGENAQASSQYIQLNSE. A disordered region spans residues 1-62; that stretch reads MSPHQTTGQE…PSRPKRKKAK (62 aa). Over residues 40 to 55 the composition is skewed to basic and acidic residues; the sequence is AAEKKAAAAKAKDPSR. The zn(2)-C6 fungal-type DNA-binding region spans 65-93; that stretch reads CYACQRGHLTCGDERPCQRCIKRGFQDAC. Disordered regions lie at residues 174 to 223, 264 to 308, 380 to 420, 537 to 574, and 639 to 668; these read GPEN…QFNS, DTPP…GDSG, SRQN…HKNA, NHNV…STTA, and AQNN…GQRR. 2 stretches are compositionally biased toward polar residues: residues 267–284 and 397–411; these read PSDN…SSGT and PVVS…NLNI. Positions 547–557 are enriched in low complexity; that stretch reads GLLTGSTSRGS. Positions 562-574 are enriched in polar residues; the sequence is PYSSDQFNSSTTA. Residues 653–664 are compositionally biased toward low complexity; sequence NSSSNGTTSTGR.

Belongs to the ERT1/acuK family.

It is found in the nucleus. Transcription factor which regulates nonfermentable carbon utilization. Activator of gluconeogenetic genes. This is Transcription activator of gluconeogenesis MCYG_04674 from Arthroderma otae (strain ATCC MYA-4605 / CBS 113480) (Microsporum canis).